Reading from the N-terminus, the 138-residue chain is Mitochondrial import inner membrane translocase subunit tim-16 (138 aa).

Over residues T32–T43 the composition is skewed to low complexity. Disordered stretches follow at residues T32 to A58 and L118 to E138. The span at G44 to A56 shows a compositional bias: polar residues. The segment at E66–S119 is J-like.

It belongs to the TIM16/PAM16 family. As to quaternary structure, probable component of the PAM complex at least composed of a mitochondrial HSP70 protein, GrpE, tim-44, tim-16 and tim-14. Associates with the TIM23 complex.

Its subcellular location is the mitochondrion inner membrane. Functionally, regulates ATP-dependent protein translocation into the mitochondrial matrix. The sequence is that of Mitochondrial import inner membrane translocase subunit tim-16 from Caenorhabditis briggsae.